The primary structure comprises 256 residues: Type III pantothenate kinase (256 aa).

Residue 6–13 (DIGNSSIV) coordinates ATP. Substrate contacts are provided by residues tyrosine 101 and 108 to 111 (GADR). The active-site Proton acceptor is aspartate 110. Aspartate 130 serves as a coordination point for K(+). Threonine 133 lines the ATP pocket. Threonine 185 contributes to the substrate binding site.

This sequence belongs to the type III pantothenate kinase family. In terms of assembly, homodimer. NH4(+) serves as cofactor. Requires K(+) as cofactor.

The protein localises to the cytoplasm. It catalyses the reaction (R)-pantothenate + ATP = (R)-4'-phosphopantothenate + ADP + H(+). It functions in the pathway cofactor biosynthesis; coenzyme A biosynthesis; CoA from (R)-pantothenate: step 1/5. Catalyzes the phosphorylation of pantothenate (Pan), the first step in CoA biosynthesis. This is Type III pantothenate kinase from Shouchella clausii (strain KSM-K16) (Alkalihalobacillus clausii).